We begin with the raw amino-acid sequence, 353 residues long: Photosystem II protein D1 (353 aa).

Residue threonine 2 is modified to N-acetylthreonine. Threonine 2 is modified (phosphothreonine). The next 3 helical transmembrane spans lie at 29–46 (YIGW…TATS), 118–133 (HFLL…EWEL), and 142–156 (WIAV…AATA). Position 118 (histidine 118) interacts with chlorophyll a. Tyrosine 126 is a binding site for pheophytin a. Positions 170 and 189 each coordinate [CaMn4O5] cluster. A helical transmembrane segment spans residues 197–218 (FHMLGVAGVFGGSLFSAMHGSL). Histidine 198 contributes to the chlorophyll a binding site. Residues histidine 215 and 264–265 (SF) each bind a quinone. Histidine 215 contacts Fe cation. Histidine 272 provides a ligand contact to Fe cation. The chain crosses the membrane as a helical span at residues 274–288 (FLAAWPVVGIWFTAL). Residues histidine 332, glutamate 333, aspartate 342, and alanine 344 each coordinate [CaMn4O5] cluster. Positions 345-353 (ALEVPSLNG) are excised as a propeptide.

It belongs to the reaction center PufL/M/PsbA/D family. In terms of assembly, PSII is composed of 1 copy each of membrane proteins PsbA, PsbB, PsbC, PsbD, PsbE, PsbF, PsbH, PsbI, PsbJ, PsbK, PsbL, PsbM, PsbT, PsbX, PsbY, PsbZ, Psb30/Ycf12, at least 3 peripheral proteins of the oxygen-evolving complex and a large number of cofactors. It forms dimeric complexes. The D1/D2 heterodimer binds P680, chlorophylls that are the primary electron donor of PSII, and subsequent electron acceptors. It shares a non-heme iron and each subunit binds pheophytin, quinone, additional chlorophylls, carotenoids and lipids. D1 provides most of the ligands for the Mn4-Ca-O5 cluster of the oxygen-evolving complex (OEC). There is also a Cl(-1) ion associated with D1 and D2, which is required for oxygen evolution. The PSII complex binds additional chlorophylls, carotenoids and specific lipids. is required as a cofactor. Tyr-161 forms a radical intermediate that is referred to as redox-active TyrZ, YZ or Y-Z. In terms of processing, C-terminally processed by CTPA; processing is essential to allow assembly of the oxygen-evolving complex and thus photosynthetic growth.

The protein resides in the plastid. It is found in the chloroplast thylakoid membrane. It carries out the reaction 2 a plastoquinone + 4 hnu + 2 H2O = 2 a plastoquinol + O2. Functionally, photosystem II (PSII) is a light-driven water:plastoquinone oxidoreductase that uses light energy to abstract electrons from H(2)O, generating O(2) and a proton gradient subsequently used for ATP formation. It consists of a core antenna complex that captures photons, and an electron transfer chain that converts photonic excitation into a charge separation. The D1/D2 (PsbA/PsbD) reaction center heterodimer binds P680, the primary electron donor of PSII as well as several subsequent electron acceptors. This Lolium perenne (Perennial ryegrass) protein is Photosystem II protein D1.